Here is a 25-residue protein sequence, read N- to C-terminus: Antithrombin-III (25 aa).

This sequence belongs to the serpin family. As to quaternary structure, forms protease inhibiting heterodimer with TMPRSS7. Phosphorylated by FAM20C in the extracellular medium. Plasma.

The protein resides in the secreted. It localises to the extracellular space. Most important serine protease inhibitor in plasma that regulates the blood coagulation cascade. AT-III inhibits thrombin, matriptase-3/TMPRSS7, as well as factors IXa, Xa and XIa. Its inhibitory activity is greatly enhanced in the presence of heparin. The sequence is that of Antithrombin-III (SERPINC1) from Mesocricetus auratus (Golden hamster).